The following is a 118-amino-acid chain: Large ribosomal subunit protein uL24 (118 aa).

It belongs to the universal ribosomal protein uL24 family. As to quaternary structure, part of the 50S ribosomal subunit.

One of two assembly initiator proteins, it binds directly to the 5'-end of the 23S rRNA, where it nucleates assembly of the 50S subunit. In terms of biological role, one of the proteins that surrounds the polypeptide exit tunnel on the outside of the subunit. The chain is Large ribosomal subunit protein uL24 from Synechococcus sp. (strain CC9902).